Reading from the N-terminus, the 383-residue chain is Ceramide synthase 3 (383 aa).

Residues 32-52 form a helical membrane-spanning segment; it reads VFVKASHLYITIPYAFLLMVV. Positions 66 to 127 are homeobox-like; it reads NALGIKKTQH…RIRQKQNKPC (62 aa). A TLC domain is found at 130–331; that stretch reads QKFQESCWRF…ILKMLNRCIF (202 aa). 5 helical membrane passes run 139-159, 174-194, 205-225, 263-283, and 302-322; these read FTFY…KPWA, LLPS…SLVF, FLAH…SWCA, LFFI…PFWI, and IFLN…GYFI. At 323-383 the chain is on the cytoplasmic side; the sequence is LKMLNRCIFT…HLIANGQHGR (61 aa). Ser-340 carries the phosphoserine modification. Residues 340-383 form a disordered region; sequence SDNEEEEEEEEEEEAESTKGKETEYLKNGLGTNRHLIANGQHGR. The span at 342–354 shows a compositional bias: acidic residues; the sequence is NEEEEEEEEEEEA. Basic and acidic residues predominate over residues 355-364; that stretch reads ESTKGKETEY.

As to expression, predominantly expressed in testis. In skin, present in the upper stratum spinosum and stratum granulosum (at protein level).

It localises to the endoplasmic reticulum membrane. The catalysed reaction is a very long-chain fatty acyl-CoA + a sphingoid base = an N-(very-long-chain fatty acyl)-sphingoid base + CoA + H(+). The enzyme catalyses docosanoyl-CoA + sphinganine = N-docosanoylsphinganine + CoA + H(+). It catalyses the reaction tetracosanoyl-CoA + sphinganine = N-tetracosanoylsphinganine + CoA + H(+). It carries out the reaction hexacosanoyl-CoA + sphinganine = N-hexacosanoylsphinganine + CoA + H(+). The catalysed reaction is 2-hydroxydocosanoyl-CoA + sphinganine = N-(2-hydroxydocosanoyl)-sphinganine + CoA + H(+). The enzyme catalyses 2-hydroxytetracosanoyl-CoA + sphinganine = N-(2-hydroxytetracosanoyl)-sphinganine + CoA + H(+). It catalyses the reaction an ultra-long-chain fatty acyl-CoA + a sphingoid base = an N-(ultra-long-chain-acyl)-sphingoid base + CoA + H(+). It carries out the reaction octacosanoyl-CoA + sphinganine = N-(octacosanoyl)-sphinganine + CoA + H(+). The catalysed reaction is a fatty acyl-CoA + sphing-4-enine = an N-acylsphing-4-enine + CoA + H(+). The enzyme catalyses sphinganine + octadecanoyl-CoA = N-(octadecanoyl)-sphinganine + CoA + H(+). It catalyses the reaction 2-hydroxyoctadecanoyl-CoA + sphinganine = N-(2-hydroxyoctadecanoyl)-sphinganine + CoA + H(+). It functions in the pathway lipid metabolism; sphingolipid metabolism. Ceramide synthase that catalyzes the transfer of the acyl chain from acyl-CoA to a sphingoid base, with high selectivity toward very- and ultra-long-chain fatty acyl-CoA (chain length greater than C22). N-acylates sphinganine and sphingosine bases to form dihydroceramides and ceramides in de novo synthesis and salvage pathways, respectively. It is crucial for the synthesis of ultra-long-chain ceramides in the epidermis, to maintain epidermal lipid homeostasis and terminal differentiation. The protein is Ceramide synthase 3 of Mus musculus (Mouse).